We begin with the raw amino-acid sequence, 282 residues long: Succinate dehydrogenase [ubiquinone] iron-sulfur subunit, mitochondrial (282 aa).

The transit peptide at M1–E30 directs the protein to the mitochondrion. 2 positions are modified to N6-acetyllysine: K53 and K57. The 2Fe-2S ferredoxin-type domain occupies D56–M135. [2Fe-2S] cluster contacts are provided by C95, C100, C103, and C115. The interval F148–W220 is interaction with SDHAF1. The 4Fe-4S ferredoxin-type domain maps to D178–Y208. C188, C191, and C194 together coordinate [4Fe-4S] cluster. Residue C198 coordinates [3Fe-4S] cluster. W203 is an a ubiquinone binding site. [3Fe-4S] cluster contacts are provided by C245 and C251. [4Fe-4S] cluster is bound at residue C255.

This sequence belongs to the succinate dehydrogenase/fumarate reductase iron-sulfur protein family. Component of complex II composed of four subunits: the flavoprotein (FP) SDHA, iron-sulfur protein (IP) SDHB, and a cytochrome b560 composed of SDHC and SDHD. Interacts with SDHAF1; the interaction is required for iron-sulfur cluster incorporation into SDHB. It depends on [2Fe-2S] cluster as a cofactor. [3Fe-4S] cluster serves as cofactor. The cofactor is [4Fe-4S] cluster.

Its subcellular location is the mitochondrion inner membrane. It carries out the reaction a quinone + succinate = fumarate + a quinol. The enzyme catalyses (R)-malate + a quinone = enol-oxaloacetate + a quinol. The catalysed reaction is (S)-malate + a quinone = enol-oxaloacetate + a quinol. The protein operates within carbohydrate metabolism; tricarboxylic acid cycle; fumarate from succinate (eukaryal route): step 1/1. Its activity is regulated as follows. Enol-oxaloacetate inhibits the succinate dehydrogenase activity. In terms of biological role, iron-sulfur protein (IP) subunit of the succinate dehydrogenase complex (mitochondrial respiratory chain complex II), responsible for transferring electrons from succinate to ubiquinone (coenzyme Q). SDH also oxidizes malate to the non-canonical enol form of oxaloacetate, enol-oxaloacetate. Enol-oxaloacetate, which is a potent inhibitor of the succinate dehydrogenase activity, is further isomerized into keto-oxaloacetate. The protein is Succinate dehydrogenase [ubiquinone] iron-sulfur subunit, mitochondrial (Sdhb) of Rattus norvegicus (Rat).